We begin with the raw amino-acid sequence, 469 residues long: Adenosylhomocysteinase (469 aa).

Residues Thr-63, Asp-139, and Glu-164 each contribute to the substrate site. 165–167 (TTT) provides a ligand contact to NAD(+). 2 residues coordinate substrate: Lys-194 and Asp-198. Residues Asn-199, 228 to 233 (GYGDVG), Glu-251, Asn-300, 321 to 323 (IGH), and Asn-375 each bind NAD(+).

The protein belongs to the adenosylhomocysteinase family. It depends on NAD(+) as a cofactor.

It is found in the cytoplasm. The catalysed reaction is S-adenosyl-L-homocysteine + H2O = L-homocysteine + adenosine. It participates in amino-acid biosynthesis; L-homocysteine biosynthesis; L-homocysteine from S-adenosyl-L-homocysteine: step 1/1. Its function is as follows. May play a key role in the regulation of the intracellular concentration of adenosylhomocysteine. This chain is Adenosylhomocysteinase, found in Pseudomonas fluorescens (strain SBW25).